The following is a 900-amino-acid chain: Nitrate reductase [NADH] (900 aa).

Position 172 (Cys172) interacts with Mo-molybdopterin. Residues Thr521–Ile596 enclose the Cytochrome b5 heme-binding domain. Residues His556 and His579 each contribute to the heme site. An FAD-binding FR-type domain is found at Arg644–Thr756. Residues Arg696–Thr699, Val713–Tyr717, Phe718, Phe725, Ala730–Ser732, and Thr783 each bind FAD.

The protein belongs to the nitrate reductase family. In terms of assembly, homodimer. Requires FAD as cofactor. The cofactor is heme. It depends on Mo-molybdopterin as a cofactor.

It carries out the reaction nitrite + NAD(+) + H2O = nitrate + NADH + H(+). Functionally, nitrate reductase is a key enzyme involved in the first step of nitrate assimilation in plants, fungi and bacteria. The polypeptide is Nitrate reductase [NADH] (NIA) (Lotus japonicus (Lotus corniculatus var. japonicus)).